The chain runs to 155 residues: Cardio acceleratory peptide 2b (155 aa).

The first 26 residues, 1-26 (MKAIFSLYNIVSAILLLVLLAEFSTA), serve as a signal peptide directing secretion. Positions 27-33 (ELNHDKN) are excised as a propeptide. V47 carries the post-translational modification Valine amide. A propeptide spanning residues 50–85 (SDPSLANSLRDASDAAVFDGLYGDASQEDYNEADYQ) is cleaved from the precursor. V96 bears the Valine amide mark. A propeptide spanning residues 99-117 (SDAELRKFAHLLALQQVLD) is cleaved from the precursor. Position 134 is a leucine amide (L134). Residues 138–155 (SVDAKAFSDASKGQQEFN) constitute a propeptide that is removed on maturation.

The protein belongs to the pyrokinin family.

It localises to the secreted. In terms of biological role, CAP-1 and CAP-2, but not CAP-3 are ligands for the Capa receptor. CAP-1 and CAP-2 are probably components of the signal transduction pathway that leads to Malpighian tubule fluid secretion via the second messenger nitric oxide. The sequence is that of Cardio acceleratory peptide 2b from Drosophila pseudoobscura pseudoobscura (Fruit fly).